A 191-amino-acid chain; its full sequence is Peptide methionine sulfoxide reductase (191 aa).

Disordered regions lie at residues 1–20 (MASS…TPEN) and 168–191 (EKGG…KCYG).

The protein belongs to the MsrA Met sulfoxide reductase family.

The enzyme catalyses L-methionyl-[protein] + [thioredoxin]-disulfide + H2O = L-methionyl-(S)-S-oxide-[protein] + [thioredoxin]-dithiol. The catalysed reaction is [thioredoxin]-disulfide + L-methionine + H2O = L-methionine (S)-S-oxide + [thioredoxin]-dithiol. Functionally, has an important function as a repair enzyme for proteins that have been inactivated by oxidation. Catalyzes the reversible oxidation-reduction of methionine sulfoxide in proteins to methionine. This Fragaria ananassa (Strawberry) protein is Peptide methionine sulfoxide reductase.